Consider the following 574-residue polypeptide: Amino-acid acetyltransferase, mitochondrial (574 aa).

Residues 1-13 constitute a mitochondrion transit peptide; that stretch reads MWRRIFAHELKYD. In terms of domain architecture, N-acetyltransferase spans 392-560; the sequence is KGAKPSSNSP…KRLREFMRSV (169 aa).

This sequence belongs to the acetyltransferase family. Interacts with the acetylglutamate kinase chain of AGR5,6.

It is found in the mitochondrion. The enzyme catalyses L-glutamate + acetyl-CoA = N-acetyl-L-glutamate + CoA + H(+). It participates in amino-acid biosynthesis; L-arginine biosynthesis; N(2)-acetyl-L-ornithine from L-glutamate: step 1/4. With respect to regulation, feedback inhibition by L-arginine. Its function is as follows. N-acetylglutamate synthase involved in arginine biosynthesis. In Saccharomyces cerevisiae (strain RM11-1a) (Baker's yeast), this protein is Amino-acid acetyltransferase, mitochondrial (ARG2).